A 177-amino-acid polypeptide reads, in one-letter code: Cytochrome c-type biogenesis protein CcmE (177 aa).

Residues methionine 1–arginine 7 lie on the Cytoplasmic side of the membrane. A helical; Signal-anchor for type II membrane protein membrane pass occupies residues leucine 8–alanine 28. Over methionine 29–arginine 177 the chain is Periplasmic. 2 residues coordinate heme: histidine 122 and tyrosine 126. Positions aspartate 133–arginine 177 are disordered. Residues glycine 145 to threonine 166 show a composition bias toward basic and acidic residues.

It belongs to the CcmE/CycJ family.

Its subcellular location is the cell inner membrane. Heme chaperone required for the biogenesis of c-type cytochromes. Transiently binds heme delivered by CcmC and transfers the heme to apo-cytochromes in a process facilitated by CcmF and CcmH. This chain is Cytochrome c-type biogenesis protein CcmE, found in Methylorubrum extorquens (strain PA1) (Methylobacterium extorquens).